We begin with the raw amino-acid sequence, 156 residues long: Snaclec rhinocetin subunit alpha (156 aa).

A signal peptide spans 1 to 23 (MGRFIFLSSGWLVVFLSLSGTGA). Cystine bridges form between Cys27-Cys38, Cys55-Cys150, and Cys125-Cys142. The C-type lectin domain maps to 34–151 (YEGHCYKFFF…CGDNYPFVCM (118 aa)).

Belongs to the snaclec family. Heterodimer; disulfide-linked. Expressed by the venom gland.

The protein localises to the secreted. Functionally, antagonist of the alpha-2 subunit of the integrin alpha-2/beta-1 (ITGA2/ITGB1) on human platelets and endothelial cells. This protein inhibits collagen-stimulated activation of human platelets in a dose-dependent manner. In addition, it antagonizes the binding of monoclonal antibodies against the alpha-2 subunit of integrin alpha-2/beta-1 to platelets and it coimmunoprecipitates with this integrin. The protein is Snaclec rhinocetin subunit alpha of Bitis rhinoceros (West African gaboon viper).